The following is a 376-amino-acid chain: N-acetyldiaminopimelate deacetylase (376 aa).

Asp69 is an active-site residue. Residue Glu128 is the Proton acceptor of the active site.

Belongs to the peptidase M20A family. N-acetyldiaminopimelate deacetylase subfamily.

The catalysed reaction is N-acetyl-(2S,6S)-2,6-diaminopimelate + H2O = (2S,6S)-2,6-diaminopimelate + acetate. The protein operates within amino-acid biosynthesis; L-lysine biosynthesis via DAP pathway; LL-2,6-diaminopimelate from (S)-tetrahydrodipicolinate (acetylase route): step 3/3. Catalyzes the conversion of N-acetyl-diaminopimelate to diaminopimelate and acetate. The polypeptide is N-acetyldiaminopimelate deacetylase (Bacillus anthracis (strain A0248)).